Reading from the N-terminus, the 693-residue chain is tRNA (guanine(27)-N(2))-dimethyltransferase (693 aa).

The Nucleolar localization signal signature appears at 95-99 (HKLRR). A C2H2-type zinc finger spans residues 144-166 (YHCIICSATITRRTDMLGHVRRH). A Trm1 methyltransferase domain is found at 187 to 648 (EILKEADTDV…APLMQFKSIL (462 aa)). Positions 220, 267, 317, and 318 each coordinate S-adenosyl-L-methionine. Residues Cys-448, Cys-451, Cys-473, and Cys-475 each contribute to the Zn(2+) site. A Glycyl lysine isopeptide (Lys-Gly) (interchain with G-Cter in SUMO2) cross-link involves residue Lys-545. 2 positions are modified to phosphoserine: Ser-572 and Ser-667.

This sequence belongs to the class I-like SAM-binding methyltransferase superfamily. Trm1 family.

Its subcellular location is the nucleus. It is found in the nucleolus. It catalyses the reaction guanosine(27) in tRNA(Tyr) + 2 S-adenosyl-L-methionine = N(2)-dimethylguanosine(27) in tRNA(Tyr) + 2 S-adenosyl-L-homocysteine + 2 H(+). Specifically dimethylates a single guanine residue at position 27 of tRNA(Tyr) using S-adenosyl-L-methionine as donor of the methyl groups. Dimethylation at position 27 of tRNA(Tyr) is required for efficient translation of tyrosine codons. Also required to maintain 3-(3-amino-3-carboxypropyl)uridine (acp3U) in the D-loop of several cytoplasmic tRNAs. This chain is tRNA (guanine(27)-N(2))-dimethyltransferase (TRMT1L), found in Macaca fascicularis (Crab-eating macaque).